The following is a 147-amino-acid chain: Large ribosomal subunit protein bL9 (147 aa).

This sequence belongs to the bacterial ribosomal protein bL9 family.

In terms of biological role, binds to the 23S rRNA. The polypeptide is Large ribosomal subunit protein bL9 (Exiguobacterium sp. (strain ATCC BAA-1283 / AT1b)).